A 185-amino-acid polypeptide reads, in one-letter code: MLKNLLYKIEKLRSGELEGFEVLKEHIQSLDEFQYQQIVERLKFQIELVEKYKPKVRPAIDPMVSTELGIYRRLDDFEIGKLLDYPECCIKSFVEDVRVAIDREHLKEVEEMKEELKNKGIYAIVLPSGFIPCSLKCEEAIKRGFIGYLTKEEFDKILELEKELKEKIRHWHFGYDEYYEKIILP.

To M.thermoautotrophicum MTH236.

This is an uncharacterized protein from Methanocaldococcus jannaschii (strain ATCC 43067 / DSM 2661 / JAL-1 / JCM 10045 / NBRC 100440) (Methanococcus jannaschii).